We begin with the raw amino-acid sequence, 152 residues long: Type-1 angiotensin II receptor-associated protein (152 aa).

The Extracellular segment spans residues 1-23 (MELPAVNLKVILLGHWLLTTWGC). Residues 24–44 (IVFSGSYAWANFTILALGVWA) form a helical membrane-spanning segment. Residues 45–55 (VAQRDSIDAIS) are Cytoplasmic-facing. The chain crosses the membrane as a helical span at residues 56 to 76 (MFLGGLLATIFLDIVHISIFY). The Extracellular portion of the chain corresponds to 77-86 (PRAGLTDTGR). A helical membrane pass occupies residues 87–107 (FGAGMAILSLLLKPLSCCFVY). Topologically, residues 108–152 (HMYRQRGGFLGSSQDRSAYQTIDSAEAPANAFAVPEGRGQDARGY) are cytoplasmic. A phosphoserine mark is found at Ser119 and Ser120. Thr128 bears the Phosphothreonine mark. Residue Ser131 is modified to Phosphoserine.

In terms of assembly, interacts with RACK1, and with the carboxy-terminal region of AGTR1.

Its subcellular location is the endoplasmic reticulum membrane. The protein resides in the golgi apparatus membrane. It is found in the cytoplasmic vesicle membrane. Functionally, appears to be a negative regulator of type-1 angiotensin II receptor-mediated signaling by regulating receptor internalization as well as mechanism of receptor desensitization such as phosphorylation. Also induces a decrease in cell proliferation and angiotensin II-stimulated transcriptional activity. In Pongo abelii (Sumatran orangutan), this protein is Type-1 angiotensin II receptor-associated protein (AGTRAP).